The sequence spans 347 residues: Phosphoribosylformylglycinamidine cyclo-ligase (347 aa).

It belongs to the AIR synthase family.

Its subcellular location is the cytoplasm. It carries out the reaction 2-formamido-N(1)-(5-O-phospho-beta-D-ribosyl)acetamidine + ATP = 5-amino-1-(5-phospho-beta-D-ribosyl)imidazole + ADP + phosphate + H(+). Its pathway is purine metabolism; IMP biosynthesis via de novo pathway; 5-amino-1-(5-phospho-D-ribosyl)imidazole from N(2)-formyl-N(1)-(5-phospho-D-ribosyl)glycinamide: step 2/2. This is Phosphoribosylformylglycinamidine cyclo-ligase from Prochlorococcus marinus (strain AS9601).